The chain runs to 315 residues: Prephenate dehydratase (315 aa).

Residues 7 to 190 form the Prephenate dehydratase domain; sequence VVAYLGPAGT…ARTRFVAVQA (184 aa). Residues 204–283 form the ACT domain; that stretch reads SVIFSLPNVP…LVFVGSWPSN (80 aa).

It catalyses the reaction prephenate + H(+) = 3-phenylpyruvate + CO2 + H2O. It functions in the pathway amino-acid biosynthesis; L-phenylalanine biosynthesis; phenylpyruvate from prephenate: step 1/1. The protein is Prephenate dehydratase (pheA) of Corynebacterium glutamicum (strain ATCC 13032 / DSM 20300 / JCM 1318 / BCRC 11384 / CCUG 27702 / LMG 3730 / NBRC 12168 / NCIMB 10025 / NRRL B-2784 / 534).